A 118-amino-acid chain; its full sequence is Large ribosomal subunit protein uL18 (118 aa).

Belongs to the universal ribosomal protein uL18 family. In terms of assembly, part of the 50S ribosomal subunit; part of the 5S rRNA/L5/L18/L25 subcomplex. Contacts the 5S and 23S rRNAs.

In terms of biological role, this is one of the proteins that bind and probably mediate the attachment of the 5S RNA into the large ribosomal subunit, where it forms part of the central protuberance. This Rickettsia peacockii (strain Rustic) protein is Large ribosomal subunit protein uL18.